A 242-amino-acid polypeptide reads, in one-letter code: Biosynthetic peptidoglycan transglycosylase (242 aa).

The chain crosses the membrane as a helical span at residues 19 to 39 (ILAALAVFWGGGIALFSVVPV).

This sequence belongs to the glycosyltransferase 51 family.

The protein localises to the cell inner membrane. The enzyme catalyses [GlcNAc-(1-&gt;4)-Mur2Ac(oyl-L-Ala-gamma-D-Glu-L-Lys-D-Ala-D-Ala)](n)-di-trans,octa-cis-undecaprenyl diphosphate + beta-D-GlcNAc-(1-&gt;4)-Mur2Ac(oyl-L-Ala-gamma-D-Glu-L-Lys-D-Ala-D-Ala)-di-trans,octa-cis-undecaprenyl diphosphate = [GlcNAc-(1-&gt;4)-Mur2Ac(oyl-L-Ala-gamma-D-Glu-L-Lys-D-Ala-D-Ala)](n+1)-di-trans,octa-cis-undecaprenyl diphosphate + di-trans,octa-cis-undecaprenyl diphosphate + H(+). It participates in cell wall biogenesis; peptidoglycan biosynthesis. Its function is as follows. Peptidoglycan polymerase that catalyzes glycan chain elongation from lipid-linked precursors. The chain is Biosynthetic peptidoglycan transglycosylase from Salmonella paratyphi A (strain ATCC 9150 / SARB42).